Reading from the N-terminus, the 707-residue chain is Choline transporter-like protein 4 (707 aa).

Residues 1-32 (MGRKQNENEAHGNSAKYDPSFRGPIKNRGCTD) lie on the Cytoplasmic side of the membrane. Residues 33–53 (IICCVLFLIFILGYIIVGLVA) form a helical membrane-spanning segment. Residues 54 to 227 (WVYGDPRQVL…KIFEDFAQSW (174 aa)) are Extracellular-facing. N-linked (GlcNAc...) asparagine glycans are attached at residues asparagine 67, asparagine 185, asparagine 195, and asparagine 196. Residues 228-248 (YWILVALGVALALSLLFILLL) traverse the membrane as a helical segment. The Cytoplasmic portion of the chain corresponds to 249–250 (RL). Residues 251–271 (VAAPLVLLLIVGVLAVLAYGI) form a helical membrane-spanning segment. Topologically, residues 272–307 (YHCWQQYQVFRDKGASITQLGFTTNFSAYQSVKETW) are extracellular. N-linked (GlcNAc...) asparagine glycosylation is present at asparagine 296. Residues 308-328 (LAALIVLAVLEGILLLMLIFL) traverse the membrane as a helical segment. Over 329 to 356 (RQRIRIAIALLKEASRAVGQMMSTMFYP) the chain is Cytoplasmic. A helical membrane pass occupies residues 357-377 (LVTFVLLVICIGYWAVTALYL). Residues 378–452 (ATSGQPQYIY…GVLGLFWTVN (75 aa)) lie on the Extracellular side of the membrane. Asparagine 391, asparagine 403, and asparagine 413 each carry an N-linked (GlcNAc...) asparagine glycan. A helical transmembrane segment spans residues 453–473 (WVLALGQCVLAGAFASFYWAF). At 474-498 (HKPRDIPTFPLSSAFIRTLRYHTGS) the chain is on the cytoplasmic side. A helical membrane pass occupies residues 499-519 (LAFGALILSLVQIARVILEYI). At 520–557 (DHKLRGSQNPVARCIICCFKCCLWCLEKFIKFLNRNAY) the chain is on the extracellular side. The helical transmembrane segment at 558–578 (IMIAIYGKNFCVSAKNAFMLL) threads the bilayer. Residues 579-594 (MRNVLRVVVLDKVTDL) are Cytoplasmic-facing. A helical transmembrane segment spans residues 595–615 (LLFFGKLLVVGGVGVLSFFFF). Residues 616-635 (SGRIKGLGKDFENPNLNYYW) are Extracellular-facing. A helical transmembrane segment spans residues 636–656 (LPIMTSIMGAYVIASGFFSVF). At 657 to 707 (GMCVDTLFLCFLEDLERNDGSQERPYYMPKALLKILGKKNEAPTGGKTRKK) the chain is on the cytoplasmic side.

It belongs to the CTL (choline transporter-like) family. N-glycosylated; N-glycosylation of Asn-67 and Asn-391 is required for a proper thiamine pyrophosphate uptake. In terms of tissue distribution, expressed in colon and cecum.

It is found in the membrane. The protein resides in the apical cell membrane. The catalysed reaction is choline(out) + n H(+)(in) = choline(in) + n H(+)(out). It catalyses the reaction thiamine diphosphate(out) = thiamine diphosphate(in). Functionally, choline transporter that plays a role in the choline-acetylcholine system and is required to the efferent innervation of hair cells in the olivocochlear bundle for the maintenance of physiological function of outer hair cells and the protection of hair cells from acoustic injury. Also described as a thiamine pyrophosphate transporter in colon, may mediate the absorption of microbiota-generated thiamine pyrophosphate and contribute to host thiamine (vitamin B1) homeostasis. In Mus musculus (Mouse), this protein is Choline transporter-like protein 4.